The primary structure comprises 447 residues: Trigger factor (447 aa).

One can recognise a PPIase FKBP-type domain in the interval 159 to 244 (GDMLLMQVES…VREIKEEKLP (86 aa)).

Belongs to the FKBP-type PPIase family. Tig subfamily.

Its subcellular location is the cytoplasm. The catalysed reaction is [protein]-peptidylproline (omega=180) = [protein]-peptidylproline (omega=0). Its function is as follows. Involved in protein export. Acts as a chaperone by maintaining the newly synthesized protein in an open conformation. Functions as a peptidyl-prolyl cis-trans isomerase. The chain is Trigger factor from Dehalococcoides mccartyi (strain CBDB1).